Consider the following 275-residue polypeptide: T-cell ecto-ADP-ribosyltransferase 2 (275 aa).

A signal peptide spans 1–20 (MPSNICKFFLTWWLIQQVTG). Cystine bridges form between C41-C243 and C141-C193. One can recognise a TR mART core domain in the interval 61–238 (AKLKVAWEEA…IFLDSPKRKK (178 aa)). NAD(+)-binding residues include Y98, R146, and Q164. Residue R146 is part of the active site. S167 is a catalytic residue. S202 lines the NAD(+) pocket. Position 204 is an ADP-ribosylarginine; by autocatalysis (R204). E209 is an active-site residue. S246 carries GPI-anchor amidated serine lipidation. A propeptide spans 247-275 (SAGARESCVSLFLVVLPSLLVQLLCLAEP) (removed in mature form).

This sequence belongs to the Arg-specific ADP-ribosyltransferase family. Postthymic T-cells.

The protein localises to the cell membrane. The enzyme catalyses L-arginyl-[protein] + NAD(+) = N(omega)-(ADP-D-ribosyl)-L-arginyl-[protein] + nicotinamide + H(+). It carries out the reaction NAD(+) + H2O = ADP-D-ribose + nicotinamide + H(+). Its function is as follows. Has both NAD(+) glycohydrolase and ADP-ribosyltransferase activity (to a lesser extent). The protein is T-cell ecto-ADP-ribosyltransferase 2 (Art2b) of Rattus norvegicus (Rat).